Here is a 65-residue protein sequence, read N- to C-terminus: Defensin-B2 (65 aa).

The signal sequence occupies residues 1-23 (MEARVLLLCAVLFLLVHTPPAAG). Disulfide bonds link Cys-29/Cys-56, Cys-36/Cys-50, and Cys-40/Cys-57.

Belongs to the beta-defensin family. As to expression, lowly expressed in spleen, and lung.

It localises to the secreted. Its function is as follows. Has antimicrobial activity. The polypeptide is Defensin-B2 (Ornithorhynchus anatinus (Duckbill platypus)).